The chain runs to 94 residues: MTYGKLIFFIIVLVGFALFMSFNVEHRCDVSLVFYTFQAVPITLSLLFAFACGALTALLFLIDPDAKTRKQKREDSPTSAPTGGVSSPEHVDVP.

2 helical membrane passes run 7 to 24 and 39 to 61; these read IFFI…SFNV and AVPI…LLFL. Residues 68–94 are disordered; the sequence is TRKQKREDSPTSAPTGGVSSPEHVDVP.

Its subcellular location is the cell membrane. This is an uncharacterized protein from Treponema pallidum (strain Nichols).